The sequence spans 262 residues: Global transcriptional regulator CodY (262 aa).

The tract at residues 1-159 (MAHLLEKTRK…SSTVVGIQLL (159 aa)) is GAF domain. Residues 207–226 (ASVIADRIGITRSVIVNALR) constitute a DNA-binding region (H-T-H motif).

This sequence belongs to the CodY family.

The protein resides in the cytoplasm. Its function is as follows. DNA-binding global transcriptional regulator which is involved in the adaptive response to starvation and acts by directly or indirectly controlling the expression of numerous genes in response to nutrient availability. During rapid exponential growth, CodY is highly active and represses genes whose products allow adaptation to nutrient depletion. The chain is Global transcriptional regulator CodY from Streptococcus gordonii (strain Challis / ATCC 35105 / BCRC 15272 / CH1 / DL1 / V288).